The chain runs to 272 residues: Shikimate dehydrogenase (NADP(+)) (272 aa).

Shikimate-binding positions include 14–16 and Thr61; that span reads SKS. Lys65 acts as the Proton acceptor in catalysis. Position 77 (Glu77) interacts with NADP(+). The shikimate site is built by Asn86 and Asp102. NADP(+) is bound by residues 126 to 130, 149 to 154, and Met213; these read GAGGA and NRTVSR. Tyr215 contacts shikimate. Gly237 lines the NADP(+) pocket.

Belongs to the shikimate dehydrogenase family. In terms of assembly, homodimer.

It carries out the reaction shikimate + NADP(+) = 3-dehydroshikimate + NADPH + H(+). Its pathway is metabolic intermediate biosynthesis; chorismate biosynthesis; chorismate from D-erythrose 4-phosphate and phosphoenolpyruvate: step 4/7. Its function is as follows. Involved in the biosynthesis of the chorismate, which leads to the biosynthesis of aromatic amino acids. Catalyzes the reversible NADPH linked reduction of 3-dehydroshikimate (DHSA) to yield shikimate (SA). This is Shikimate dehydrogenase (NADP(+)) from Escherichia coli O6:H1 (strain CFT073 / ATCC 700928 / UPEC).